Here is a 236-residue protein sequence, read N- to C-terminus: MKMMDANEIISFIQNSTKSTPVKVYVKGELEGINFGESAKAFINGNTGVVFGEWSEIQTAIEENQSKIEDYVVENDRRNSAIPMLDLKNIKARIEPGAIIRDQVEIGDNAVIMMGASINIGSVIGEGTMIDMNVVLGGRATVGKNCHIGAGSVLAGVIEPPSAKPVVIEDDVVIGANAVVLEGVTVGKGAVVAAGAIVVNDVEPYTVVAGTPAKKIKDIDEKTKGKTEIKQELRQL.

Belongs to the transferase hexapeptide repeat family. DapH subfamily.

It carries out the reaction (S)-2,3,4,5-tetrahydrodipicolinate + acetyl-CoA + H2O = L-2-acetamido-6-oxoheptanedioate + CoA. It functions in the pathway amino-acid biosynthesis; L-lysine biosynthesis via DAP pathway; LL-2,6-diaminopimelate from (S)-tetrahydrodipicolinate (acetylase route): step 1/3. Its function is as follows. Catalyzes the transfer of an acetyl group from acetyl-CoA to tetrahydrodipicolinate. The polypeptide is 2,3,4,5-tetrahydropyridine-2,6-dicarboxylate N-acetyltransferase (Bacillus subtilis (strain 168)).